The sequence spans 400 residues: Na(+)/H(+) antiporter NhaA (400 aa).

A run of 11 helical transmembrane segments spans residues 9–29 (FLVS…IAMV), 60–80 (LILW…GLEL), 96–116 (VLPA…FYLF), 127–147 (WAIP…ILGA), 155–175 (IFLV…MAIF), 180–200 (LSLI…ALNL), 210–230 (LILG…ATLA), 263–283 (YFVL…GIGL), 294–314 (VILG…FVAI), 327–347 (WISF…SLFI), and 366–386 (VLIA…IASV).

Belongs to the NhaA Na(+)/H(+) (TC 2.A.33) antiporter family.

It is found in the cell inner membrane. It catalyses the reaction Na(+)(in) + 2 H(+)(out) = Na(+)(out) + 2 H(+)(in). Functionally, na(+)/H(+) antiporter that extrudes sodium in exchange for external protons. The polypeptide is Na(+)/H(+) antiporter NhaA (Campylobacter curvus (strain 525.92)).